We begin with the raw amino-acid sequence, 131 residues long: Fumarate reductase subunit C (131 aa).

3 helical membrane passes run 30–50 (EGTC…VFAL), 58–78 (AGFV…VTLI), and 109–129 (IVRG…AVAL).

It belongs to the FrdC family. In terms of assembly, part of an enzyme complex containing four subunits: a flavoprotein (FrdA), an iron-sulfur protein (FrdB), and two hydrophobic anchor proteins (FrdC and FrdD).

The protein resides in the cell inner membrane. Its function is as follows. Two distinct, membrane-bound, FAD-containing enzymes are responsible for the catalysis of fumarate and succinate interconversion; fumarate reductase is used in anaerobic growth, and succinate dehydrogenase is used in aerobic growth. Anchors the catalytic components of the fumarate reductase complex to the cell inner membrane, binds quinones. The protein is Fumarate reductase subunit C of Proteus vulgaris.